Here is a 142-residue protein sequence, read N- to C-terminus: Large ribosomal subunit protein uL11 (142 aa).

It belongs to the universal ribosomal protein uL11 family. Part of the ribosomal stalk of the 50S ribosomal subunit. Interacts with L10 and the large rRNA to form the base of the stalk. L10 forms an elongated spine to which L12 dimers bind in a sequential fashion forming a multimeric L10(L12)X complex. One or more lysine residues are methylated.

Its function is as follows. Forms part of the ribosomal stalk which helps the ribosome interact with GTP-bound translation factors. This is Large ribosomal subunit protein uL11 from Photobacterium profundum (strain SS9).